The sequence spans 258 residues: 4-hydroxy-tetrahydrodipicolinate reductase (258 aa).

Residues 8–13, 86–88, and 110–113 each bind NAD(+); these read GGSGKM, GTT, and ATNM. The Proton donor/acceptor role is filled by His142. His143 lines the (S)-2,3,4,5-tetrahydrodipicolinate pocket. The active-site Proton donor is the Lys146. Residue 152-153 coordinates (S)-2,3,4,5-tetrahydrodipicolinate; the sequence is GT.

It belongs to the DapB family.

The protein resides in the cytoplasm. The catalysed reaction is (S)-2,3,4,5-tetrahydrodipicolinate + NAD(+) + H2O = (2S,4S)-4-hydroxy-2,3,4,5-tetrahydrodipicolinate + NADH + H(+). The enzyme catalyses (S)-2,3,4,5-tetrahydrodipicolinate + NADP(+) + H2O = (2S,4S)-4-hydroxy-2,3,4,5-tetrahydrodipicolinate + NADPH + H(+). Its pathway is amino-acid biosynthesis; L-lysine biosynthesis via DAP pathway; (S)-tetrahydrodipicolinate from L-aspartate: step 4/4. Functionally, catalyzes the conversion of 4-hydroxy-tetrahydrodipicolinate (HTPA) to tetrahydrodipicolinate. The polypeptide is 4-hydroxy-tetrahydrodipicolinate reductase (Campylobacter hominis (strain ATCC BAA-381 / DSM 21671 / CCUG 45161 / LMG 19568 / NCTC 13146 / CH001A)).